The primary structure comprises 159 residues: MSSQSFHNSPSLRVILKQRKKKRLLIVLFCCLIIAIATSLITYALRNTVSFFRMPSEVTKEDILMGRPLRLGGFVEKGTVEYVGDRGVIFFVTDNVKHEKVIFSGAIPDLFREGQGVVVEGYFDKQGFFIGTRILAKHDETYMSRETADRLNKHHRVEK.

Residues 1–23 lie on the Cytoplasmic side of the membrane; it reads MSSQSFHNSPSLRVILKQRKKKR. A helical; Signal-anchor for type II membrane protein transmembrane segment spans residues 24 to 44; it reads LLIVLFCCLIIAIATSLITYA. Residues 45–159 lie on the Periplasmic side of the membrane; the sequence is LRNTVSFFRM…RLNKHHRVEK (115 aa). Heme is bound by residues His138 and Tyr142.

It belongs to the CcmE/CycJ family.

It is found in the cell inner membrane. Functionally, heme chaperone required for the biogenesis of c-type cytochromes. Transiently binds heme delivered by CcmC and transfers the heme to apo-cytochromes in a process facilitated by CcmF and CcmH. This is Cytochrome c-type biogenesis protein CcmE from Bartonella henselae (strain ATCC 49882 / DSM 28221 / CCUG 30454 / Houston 1) (Rochalimaea henselae).